We begin with the raw amino-acid sequence, 96 residues long: uncharacterized protein (96 aa).

The first 30 residues, 1 to 30, serve as a signal peptide directing secretion; it reads MLILSVFCAVFYAFLTAIVANFSLKTLAIG. Topologically, residues 31 to 54 are extracellular; that stretch reads ATFVKSHLKSNPIPYGDLVADSLD. Residues 55 to 75 form a helical membrane-spanning segment; the sequence is FGNITPTVTLLFAILIAVLAL. Over 76 to 96 the chain is Cytoplasmic; it reads KCEFSCSTSAPAGQASGRKVK.

The protein localises to the membrane. This is an uncharacterized protein from Dictyostelium discoideum (Social amoeba).